The chain runs to 589 residues: Delta-like protein 3 (589 aa).

Residues 1–32 (MVSLQVSSLPQTLILAFLLPQALPAGVFELQI) form the signal peptide. The Extracellular segment spans residues 33–494 (HSFGPGPGPG…LRQADSQRFL (462 aa)). Residues 174–213 (ARCEPPAVGAACARLCRSRSAPSRCGPGLRPCTPFPDECE) enclose the DSL domain. EGF-like domains lie at 218 to 251 (SLTVCRAGCSPEHGYCEEPDECHCLEGWTGPLCT), 276 to 312 (GPGPCDGNPCANGGSCSETPGSFECACPRGFYGPRCE), 314 to 353 (SGVTCADGPCFNGGLCVGGEDPDSAYVCHCPPAFQGSNCE), 355 to 391 (RVDRCSLQPCQNGGLCLDLGHALRCRCRAGFAGPRCE), 393 to 429 (DLDDCAGRACANGGTCVEGGGARRCSCALGFGGRDCR), and 431 to 467 (RADPCASRPCAHGGRCYAHFSGLVCACAPGYMGVRCE). Cystine bridges form between Cys222-Cys233, Cys226-Cys239, Cys241-Cys250, Cys280-Cys291, Cys285-Cys300, Cys302-Cys311, Cys318-Cys329, Cys323-Cys341, Cys343-Cys352, Cys359-Cys370, Cys364-Cys379, Cys381-Cys390, Cys397-Cys408, Cys402-Cys417, Cys419-Cys428, Cys435-Cys446, Cys440-Cys455, and Cys457-Cys466. The chain crosses the membrane as a helical span at residues 495–515 (LPPALGLLAAAALAGAALLLI). Residues 516–589 (HVRRRGPGRD…PAPSIYAREA (74 aa)) lie on the Cytoplasmic side of the membrane. A disordered region spans residues 552–574 (QDGAGDGPTSSADWNHPEDGDSR).

Can bind and activate Notch-1 or another Notch receptor. Post-translationally, ubiquitinated by MIB (MIB1 or MIB2), leading to its endocytosis and subsequent degradation.

It is found in the membrane. Inhibits primary neurogenesis. May be required to divert neurons along a specific differentiation pathway. Plays a role in the formation of somite boundaries during segmentation of the paraxial mesoderm. The sequence is that of Delta-like protein 3 (Dll3) from Rattus norvegicus (Rat).